Here is a 132-residue protein sequence, read N- to C-terminus: Small ribosomal subunit protein uS8c (132 aa).

This sequence belongs to the universal ribosomal protein uS8 family. Part of the 30S ribosomal subunit.

The protein resides in the plastid. It is found in the chloroplast. Functionally, one of the primary rRNA binding proteins, it binds directly to 16S rRNA central domain where it helps coordinate assembly of the platform of the 30S subunit. This is Small ribosomal subunit protein uS8c (rps8) from Anthoceros angustus (Hornwort).